The sequence spans 783 residues: Lon protease (783 aa).

Residues 11 to 203 form the Lon N-terminal domain; sequence IPVLPLRDVV…FLMGQMESEI (193 aa). 355-362 is an ATP binding site; the sequence is GPPGVGKT. One can recognise a Lon proteolytic domain in the interval 591-772; that stretch reads SNRIGQVTGL…DEVLKVALER (182 aa). Residues S678 and K721 contribute to the active site.

Belongs to the peptidase S16 family. In terms of assembly, homohexamer. Organized in a ring with a central cavity.

It localises to the cytoplasm. It catalyses the reaction Hydrolysis of proteins in presence of ATP.. Its function is as follows. ATP-dependent serine protease that mediates the selective degradation of mutant and abnormal proteins as well as certain short-lived regulatory proteins. Required for cellular homeostasis and for survival from DNA damage and developmental changes induced by stress. Degrades polypeptides processively to yield small peptide fragments that are 5 to 10 amino acids long. Binds to DNA in a double-stranded, site-specific manner. Regulates swarmer cell differentiation of V.parahaemolyticus. This is Lon protease from Vibrio parahaemolyticus serotype O3:K6 (strain RIMD 2210633).